Reading from the N-terminus, the 678-residue chain is Zinc finger translocation-associated protein (678 aa).

Disordered stretches follow at residues 1-100, 174-250, 333-413, and 493-583; these read MEPG…PGRD, GAGG…GSRG, LSEL…RDHR, and PESP…NYQP. Residues 66–78 show a composition bias toward low complexity; that stretch reads PSSRARGPASSGR. Residues 79-88 are compositionally biased toward basic and acidic residues; sequence KYSDHCEARA. Residues 187-200 show a composition bias toward acidic residues; that stretch reads AEEEEEEDEEEEEG. Positions 205 to 214 are enriched in low complexity; the sequence is ACPPKGSGKA. K375 is covalently cross-linked (Glycyl lysine isopeptide (Lys-Gly) (interchain with G-Cter in SUMO2)). The span at 493-509 shows a compositional bias: low complexity; the sequence is PESPSVPVAPSTASASE. 2 stretches are compositionally biased toward acidic residues: residues 512 to 524 and 539 to 549; these read GGAE…EEWW and AEEEDDEDDSQ. Positions 557-572 are enriched in pro residues; the sequence is PPLPLPPPPPPPPPPP. The span at 573 to 583 shows a compositional bias: basic and acidic residues; that stretch reads RSREQRRNYQP.

This chain is Zinc finger translocation-associated protein, found in Mus musculus (Mouse).